Reading from the N-terminus, the 51-residue chain is Large ribosomal subunit protein eL39 (51 aa).

The interval 32 to 51 is disordered; sequence KRRVTRSPARRHWRRQKLKA.

It belongs to the eukaryotic ribosomal protein eL39 family.

This is Large ribosomal subunit protein eL39 from Pyrobaculum calidifontis (strain DSM 21063 / JCM 11548 / VA1).